The primary structure comprises 581 residues: Transcription activator GAGA (581 aa).

The 66-residue stretch at 34 to 99 folds into the BTB domain; the sequence is VDCTLAAGGR…VYRGEVSVDH (66 aa). The segment at 201–397 is interaction with E(bx); it reads VIQAFLPARK…SSGSGSGALS (197 aa). Thr-237 carries the post-translational modification Phosphothreonine. Disordered regions lie at residues 298–343 and 364–404; these read ITPA…EQPA and LRHF…SVPQ. The segment at 343–366 adopts a C2H2-type; degenerate zinc-finger fold; that stretch reads ATCPICYAVIRQSRNLRRHLELRH. A compositionally biased stretch (low complexity) spans 381–401; that stretch reads GKKSSSGSSGSGSGALSSSGS.

Interacts with Bin1, lolal, corto, ttk and ph-p. Interacts with FACT subunits Ssrp and dre4/SPT16. Interacts with E(bx). Upon ecdysone stimulation, interacts with Nup98. Post-translationally, the N-terminus is blocked. Expressed in the central nervous system throughout development.

It localises to the nucleus. Its subcellular location is the chromosome. Functionally, transcriptional activator that functions by regulating chromatin structure. Overcomes the repressive effects of chromatin by promoting the open chromatin conformation in promoter gene regions, thereby allowing access to other transcription factors. Binds to DNA Polycomb response elements (PREs) at the bithorax complex and to the proximal region of the engrailed promoter, and positively regulates transcription of many genes including homeotic ones. Involved in zygotic genome activation (ZGA), a critical event in early embryonic development during which the developmental control passes from maternally provided mRNAs to the expression of the zygotic genome after fertilization. Binds to the DNA sequence (GA)n, with optimal binding to the pentamer 5'-GAGAG-3'. Binds DNA as an oligomer. May also act as a transcriptional repressor, maintaining the repressed state of genes including lolal, and down-regulating its own transcription. Required for dosage compensation in males and may be involved in oogenesis. Also has a role in nuclear division. The chain is Transcription activator GAGA (Trl) from Drosophila melanogaster (Fruit fly).